The chain runs to 272 residues: Arylesterase (272 aa).

The AB hydrolase-1 domain occupies 21-253 (KPVLFSHGWL…LKVYKDAPHG (233 aa)). Residue Trp-29 coordinates acetate. The active site involves Ser-95. An acetate-binding site is contributed by Met-96. Residues Asp-223 and His-252 contribute to the active site.

This sequence belongs to the AB hydrolase superfamily. Bacterial non-heme haloperoxidase / perhydrolase family. Dimer of trimers.

The enzyme catalyses a phenyl acetate + H2O = a phenol + acetate + H(+). It carries out the reaction peracetic acid + H2O = acetate + H2O2 + H(+). It catalyses the reaction a percarboxylic acid + H2O = a carboxylate + H2O2 + H(+). Its function is as follows. Hydrolyzes phenolic esters, such as phenyl acetate, nitrophenyl acetate and naphtyl acetate. Can act on a wide range of esters, but reaction rate and enantioselectivity differ significantly depending on the substrate. Shows a preference for esters with small acyl groups. Also shows low perhydrolase activity, and catalyzes the reversible formation of peroxycarboxylic acids from carboxylic acids and hydrogen peroxide. In vitro, enzyme-generated peracetic acid oxidizes bromide ion to bromonium, which reacts with monochlorodimedone to form bromochlorodimedone. This chain is Arylesterase, found in Pseudomonas fluorescens.